Consider the following 473-residue polypeptide: MTVDTITSTSNGNQDVPKEFFPKEFETQLLHVGRFPDILGSCAVPVYSSAAFEFNSVAHGARLLNLTQFGNIYSRFTNPTVNVLQNRLAGLEGGVAACAVASGSAAVVVTVMALAGVGDNFVSSFHVHAGTFHQFESLAKQMGIECRFVKSRDPADFAAAIDDKTKFVWLETISNPGNVILDLEAVSMVCHTKGIPLICDNTFGCAGYFCRPINHGVDIVVHSATKWIGGHGTTVGGVIVDGGTFDWGQHPDRFPQFHDPRTRLWERFSRRAFAVRCQFEILRDTGSTLSAPAAQQLLVGLESLAVRCERHAQNAAKIADWLREHPLVAWVSYVGHPNHPDHQGALKYLKRGFGSVICFGLRGGFEAGALFCDALKMVITTTNLGDAKTLILHPASTTHEHFSSEHRAEAGVTDDMIRLSVGIEQIKDIKADFEQAFEQVLRGKKSLRKPCIGKILLQDEINEDLFGPSACRT.

Position 226 is an N6-(pyridoxal phosphate)lysine (Lys-226).

The protein belongs to the trans-sulfuration enzymes family. Pyridoxal 5'-phosphate is required as a cofactor.

The protein operates within alkaloid biosynthesis. In terms of biological role, sulfhydrylase-like protein; part of the gene cluster that mediates the biosynthesis of loline alkaloids, potent insecticidal agents composed of a pyrrolizidine ring system and an uncommon ether bridge linking carbons 2 and 7. Lolines are structurally differentiated by the various modifications of the L-amino group and include norloline, loline, N-methylloline, N-acetylloline, N-acetylnorloline, and N-formylloline. The first committed step is the condensation of O-acetyl-L-homoserine (derived from L-aspartic acid) and L-proline, probably catalyzed by the gamma-type pyridoxal 5'-phosphate(PLP)-dependent enzyme lolC, to give the diamino diacid, NACPP. Ensuing cyclization, decarboxylation, and acetylation steps yield 1-exo-acetamidopyrrolizidine (AcAP). LolO is required for installation of the ether bridge upon the pathway intermediate, 1-exo-acetamidopyrrolizidine (AcAP). In sequential 2-oxoglutarate- and O(2)-consuming steps, lolO removes hydrogens from C2 and C7 of AcAP to form both carbon-oxygen bonds in N-acetylnorloline (NANL), the precursor to all other lolines. The enzymes lolD, lolE, lolF and lolT have also been proposed to be involved in the ether-bridge installation. Further processing of the exocyclic moiety of NANL by fungal N-acetamidase (LolN), methyltransferase (LolM), and cytochrome P450 (LolP) enzymes, with occasional involvement of a plant acetyltransferase, generates the other known lolines. LolN transforms NANL to norlonine which is monomethylated and dimethylated to respectively lonine and N-methyllonine (NML) by lolM. LolP catalyzes hydroxylation of the methyl group in N-methylloline (NML) and further oxygenation to N-formylloline (NFL). A plant acetyltransferase is responsible for the acetylation of loline to form N-acetylloline (NAL). LolA might interact with aspartate kinase to prevent feedback inhibition of its activity by these end products and thereby promote production of L-homoserine from L-aspartate. The polypeptide is Sulfhydrylase-like protein lolC1 (Epichloe uncinata (Endophyte fungus)).